The following is a 173-amino-acid chain: Alpha-crystallin A chain (173 aa).

An N-acetylmethionine modification is found at Met1. Residues 1 to 63 (MDVTIQHPWF…RTVLDSGISE (63 aa)) form a required for complex formation with BFSP1 and BFSP2 region. Gln6 is subject to Deamidated glutamine; partial. Ser45 carries the post-translational modification Phosphoserine. Position 50 is a deamidated glutamine; partial (Gln50). Residues 52–162 (LFRTVLDSGI…GHSERAIPVS (111 aa)) form the sHSP domain. At Lys70 the chain carries N6-acetyllysine. Residue Gln90 is modified to Deamidated glutamine; partial. Lys99 is modified (N6-acetyllysine). His100 provides a ligand contact to Zn(2+). Position 101 is a deamidated asparagine; partial (Asn101). The Zn(2+) site is built by Glu102 and His107. Ser122 is subject to Phosphoserine. Asn123 bears the Deamidated asparagine; partial mark. The tract at residues 145–173 (KVQSGLDAGHSERAIPVSREEKPSSAPSS) is disordered. Gln147 is modified (deamidated glutamine; partial). Residues 153–167 (GHSERAIPVSREEKP) are compositionally biased toward basic and acidic residues. His154 lines the Zn(2+) pocket. Ser162 is a glycosylation site (O-linked (GlcNAc) serine).

This sequence belongs to the small heat shock protein (HSP20) family. Heteromer composed of three CRYAA and one CRYAB subunits. Inter-subunit bridging via zinc ions enhances stability, which is crucial as there is no protein turn over in the lens. Can also form homodimers and homotetramers (dimers of dimers) which serve as the building blocks of homooligomers. Within homooligomers, the zinc-binding motif is created from residues of 3 different molecules. His-100 and Glu-102 from one molecule are ligands of the zinc ion, and His-107 and His-154 residues from additional molecules complete the site with tetrahedral coordination geometry. Part of a complex required for lens intermediate filament formation composed of BFSP1, BFSP2 and CRYAA. Post-translationally, acetylation at Lys-70 may increase chaperone activity. In terms of processing, undergoes age-dependent proteolytical cleavage at the C-terminus.

It is found in the cytoplasm. The protein resides in the nucleus. Functionally, contributes to the transparency and refractive index of the lens. Acts as a chaperone, preventing aggregation of various proteins under a wide range of stress conditions. Required for the correct formation of lens intermediate filaments as part of a complex composed of BFSP1, BFSP2 and CRYAA. This chain is Alpha-crystallin A chain (CRYAA), found in Oryctolagus cuniculus (Rabbit).